A 189-amino-acid polypeptide reads, in one-letter code: UPF0301 protein RPR_01165 (189 aa).

It belongs to the UPF0301 (AlgH) family.

The protein is UPF0301 protein RPR_01165 of Rickettsia peacockii (strain Rustic).